The chain runs to 430 residues: Enolase (430 aa).

(2R)-2-phosphoglycerate is bound at residue Gln-167. The Proton donor role is filled by Glu-209. Residues Asp-246, Glu-287, and Asp-314 each coordinate Mg(2+). The (2R)-2-phosphoglycerate site is built by Lys-339, Arg-368, Ser-369, and Lys-390. Residue Lys-339 is the Proton acceptor of the active site.

Belongs to the enolase family. It depends on Mg(2+) as a cofactor.

The protein resides in the cytoplasm. It is found in the secreted. Its subcellular location is the cell surface. The enzyme catalyses (2R)-2-phosphoglycerate = phosphoenolpyruvate + H2O. It participates in carbohydrate degradation; glycolysis; pyruvate from D-glyceraldehyde 3-phosphate: step 4/5. Its function is as follows. Catalyzes the reversible conversion of 2-phosphoglycerate (2-PG) into phosphoenolpyruvate (PEP). It is essential for the degradation of carbohydrates via glycolysis. The chain is Enolase from Prochlorococcus marinus (strain MIT 9301).